Here is a 415-residue protein sequence, read N- to C-terminus: T-cell-specific guanine nucleotide triphosphate-binding protein 1 (415 aa).

Positions 55 to 237 (APLHIAVTGE…PKLETKLLQD (183 aa)) constitute an IRG-type G domain. Positions 66, 68, 69, and 70 each coordinate GDP. Residue T89 is modified to (Microbial infection) Phosphothreonine; by ROP17. 4 residues coordinate GDP: G90, K171, D173, and N219.

Belongs to the TRAFAC class dynamin-like GTPase superfamily. IRG family. In terms of assembly, monomer, homodimer or homotetramer in the presence of GTP. Forms higher order homooligomers in GTP-dependent manner. (Microbial infection) Interacts with Toxoplasma gondii ROP18. Post-translationally, (Microbial infection) Phosphorylated by Toxoplasma gondii ROP17; the phosphorylation leads to disassembly of IRGB6 (TGTP1/TGTP2) polymers into monomers and dimers. Phosphorylated by Toxoplasma gondii ROP18. In terms of tissue distribution, expressed in thymus and lymph nodes, predominantly T-cells. Not expressed by immature CD4(+) CD8(+) thymocytes (at protein level). Expressed in IFNG-stimulated macrophages. Expressed at low levels in unstimulated astrocytes. Due to sequence similarity with Tgtp2, it is impossible to assign unambiguously experimental data published in the literature to Tgtp1 or Tgtp2 gene.

It localises to the cytoplasm. The protein localises to the endoplasmic reticulum. Its subcellular location is the golgi apparatus. It is found in the parasitophorous vacuole membrane. The catalysed reaction is GTP + H2O = GDP + phosphate + H(+). In terms of biological role, involved in innate cell-autonomous resistance to intracellular pathogens, such as Toxoplasma gondii. During avirulent type II T.gondii infection, recruited to the parasitophorous vacuole (PV) membrane, leading to PV vesiculation and rupture, and subsequent digestion of the parasite within the cytosol. Not recruited to virulent type I T.gondii PV membrane. May confer an antiviral state for vesicular stomatitis virus. The protein is T-cell-specific guanine nucleotide triphosphate-binding protein 1 (Tgtp1) of Mus musculus (Mouse).